Reading from the N-terminus, the 549-residue chain is Glucose-6-phosphate isomerase (549 aa).

The active-site Proton donor is glutamate 355. Residues histidine 387 and lysine 515 contribute to the active site.

Belongs to the GPI family.

It localises to the cytoplasm. It catalyses the reaction alpha-D-glucose 6-phosphate = beta-D-fructose 6-phosphate. It functions in the pathway carbohydrate biosynthesis; gluconeogenesis. The protein operates within carbohydrate degradation; glycolysis; D-glyceraldehyde 3-phosphate and glycerone phosphate from D-glucose: step 2/4. Functionally, catalyzes the reversible isomerization of glucose-6-phosphate to fructose-6-phosphate. This chain is Glucose-6-phosphate isomerase, found in Histophilus somni (strain 129Pt) (Haemophilus somnus).